A 277-amino-acid chain; its full sequence is Thymidylate synthase (277 aa).

R21 contributes to the dUMP binding site. H51 contributes to the (6R)-5,10-methylene-5,6,7,8-tetrahydrofolate binding site. 126 to 127 (RR) is a dUMP binding site. C159 functions as the Nucleophile in the catalytic mechanism. DUMP contacts are provided by residues 179 to 182 (RSAD), N190, and 220 to 222 (HLY). D182 lines the (6R)-5,10-methylene-5,6,7,8-tetrahydrofolate pocket. S276 serves as a coordination point for (6R)-5,10-methylene-5,6,7,8-tetrahydrofolate.

Belongs to the thymidylate synthase family. Bacterial-type ThyA subfamily. In terms of assembly, homodimer.

It localises to the cytoplasm. The enzyme catalyses dUMP + (6R)-5,10-methylene-5,6,7,8-tetrahydrofolate = 7,8-dihydrofolate + dTMP. It participates in pyrimidine metabolism; dTTP biosynthesis. Functionally, catalyzes the reductive methylation of 2'-deoxyuridine-5'-monophosphate (dUMP) to 2'-deoxythymidine-5'-monophosphate (dTMP) while utilizing 5,10-methylenetetrahydrofolate (mTHF) as the methyl donor and reductant in the reaction, yielding dihydrofolate (DHF) as a by-product. This enzymatic reaction provides an intracellular de novo source of dTMP, an essential precursor for DNA biosynthesis. This Teredinibacter turnerae (strain ATCC 39867 / T7901) protein is Thymidylate synthase.